Here is a 379-residue protein sequence, read N- to C-terminus: Proton extrusion protein PxcA (379 aa).

4 helical membrane-spanning segments follow: residues 153–173 (TLVSLRILLLMILVPLLLQQI), 254–274 (AIKNVLADVVATIGFVLVCLF), 300–320 (FVIILFTDIFVGFHSPEGWTV), and 337–357 (FIDLFIATFPVILATIFKYWI).

Belongs to the CemA family.

It localises to the cell inner membrane. Functionally, required for H(+) efflux immediately after light irradiation to form a rapid H(+) concentration gradient across the thylakoid membranes. Together with PxcL, contributes to transient H(+) uptake following dark to light transition. This is Proton extrusion protein PxcA from Synechococcus sp. (strain RCC307).